The chain runs to 310 residues: Porphobilinogen deaminase (310 aa).

Position 242 is an S-(dipyrrolylmethanemethyl)cysteine (Cys-242).

This sequence belongs to the HMBS family. In terms of assembly, monomer. Dipyrromethane serves as cofactor.

It catalyses the reaction 4 porphobilinogen + H2O = hydroxymethylbilane + 4 NH4(+). Its pathway is porphyrin-containing compound metabolism; protoporphyrin-IX biosynthesis; coproporphyrinogen-III from 5-aminolevulinate: step 2/4. Tetrapolymerization of the monopyrrole PBG into the hydroxymethylbilane pre-uroporphyrinogen in several discrete steps. The sequence is that of Porphobilinogen deaminase from Shewanella baltica (strain OS155 / ATCC BAA-1091).